A 166-amino-acid polypeptide reads, in one-letter code: Probable DHNTP pyrophosphohydrolase (166 aa).

In terms of domain architecture, Nudix hydrolase spans 42–166 (DLQLSASALV…FKKYYRYKNI (125 aa)). The short motif at 73-94 (GHVELKESPLDTAIREFHEETG) is the Nudix box element. Residues glutamate 88 and glutamate 92 each contribute to the Mg(2+) site.

Belongs to the Nudix hydrolase family. Monomer. Mg(2+) serves as cofactor.

It participates in cofactor biosynthesis; tetrahydrofolate biosynthesis; 2-amino-4-hydroxy-6-hydroxymethyl-7,8-dihydropteridine diphosphate from 7,8-dihydroneopterin triphosphate: step 1/4. Functionally, probably mediates the removal of pyrophosphate from dihydroneopterin triphosphate (DHNTP), a possible step in the pterin branch of the folate synthesis pathway. The polypeptide is Probable DHNTP pyrophosphohydrolase (folQ) (Lactococcus lactis subsp. cremoris (strain MG1363)).